A 315-amino-acid chain; its full sequence is Taste receptor type 2 member 3 (315 aa).

The Extracellular segment spans residues 1–5 (MGLTE). A helical membrane pass occupies residues 6–26 (GVFLILSGTQFTLGILVNCFI). The Cytoplasmic portion of the chain corresponds to 27 to 41 (ELVNGSSWFKTKRMS). A helical membrane pass occupies residues 42–62 (LSDFIITTLALLRIILLCIIL). Over 63–93 (TDSFLIEFSPNTHDSGIIMQIIDVSWTFTNH) the chain is Extracellular. Residues 94-114 (LSIWLATCLGVLYCLKIASFS) traverse the membrane as a helical segment. The Cytoplasmic portion of the chain corresponds to 115–127 (HPTFLWLKWRVSR). A helical membrane pass occupies residues 128–148 (VMVWMLLGALLLSCGSTASLI). Over 149-185 (NEFKLYSVFRGIEATRNVTEHFRKKRSEYYLIHVLGT) the chain is Extracellular. Asn-165 carries an N-linked (GlcNAc...) asparagine glycan. Residues 186 to 206 (LWYLPPLIVSLASYSLLIFSL) form a helical membrane-spanning segment. Residues 207–233 (GRHTRQMLQNGTSSRDPTTEAHKRAIR) are Cytoplasmic-facing. Residues 234–254 (IILSFFFLFLLYFLAFLIASF) form a helical membrane-spanning segment. At 255–265 (GNFLPKTKMAK) the chain is on the extracellular side. Residues 266–286 (MIGEVMTMFYPAGHSFILILG) form a helical membrane-spanning segment. At 287-315 (NSKLKQTFVVMLRCESGHLKPGSKGPIFS) the chain is on the cytoplasmic side.

Belongs to the G-protein coupled receptor T2R family.

The protein resides in the membrane. In terms of biological role, gustducin-coupled receptor implicated in the perception of bitter compounds in the oral cavity and the gastrointestinal tract. Signals through PLCB2 and the calcium-regulated cation channel TRPM5. The polypeptide is Taste receptor type 2 member 3 (TAS2R3) (Gorilla gorilla gorilla (Western lowland gorilla)).